Reading from the N-terminus, the 152-residue chain is Xanthine-guanine phosphoribosyltransferase (152 aa).

Residues 37 to 38 (RG), arginine 69, and 88 to 96 (DDLVDTGGT) each bind 5-phospho-alpha-D-ribose 1-diphosphate. Arginine 69 is a binding site for GMP. Position 89 (aspartate 89) interacts with Mg(2+). Residues aspartate 92 and isoleucine 135 each contribute to the guanine site. Residues aspartate 92 and isoleucine 135 each coordinate xanthine. GMP contacts are provided by residues 92-96 (DTGGT) and 134-135 (WI).

It belongs to the purine/pyrimidine phosphoribosyltransferase family. XGPT subfamily. As to quaternary structure, homotetramer. It depends on Mg(2+) as a cofactor.

The protein localises to the cell inner membrane. The enzyme catalyses GMP + diphosphate = guanine + 5-phospho-alpha-D-ribose 1-diphosphate. It carries out the reaction XMP + diphosphate = xanthine + 5-phospho-alpha-D-ribose 1-diphosphate. It catalyses the reaction IMP + diphosphate = hypoxanthine + 5-phospho-alpha-D-ribose 1-diphosphate. Its pathway is purine metabolism; GMP biosynthesis via salvage pathway; GMP from guanine: step 1/1. The protein operates within purine metabolism; XMP biosynthesis via salvage pathway; XMP from xanthine: step 1/1. Its function is as follows. Purine salvage pathway enzyme that catalyzes the transfer of the ribosyl-5-phosphate group from 5-phospho-alpha-D-ribose 1-diphosphate (PRPP) to the N9 position of the 6-oxopurines guanine and xanthine to form the corresponding ribonucleotides GMP (guanosine 5'-monophosphate) and XMP (xanthosine 5'-monophosphate), with the release of PPi. To a lesser extent, also acts on hypoxanthine. This chain is Xanthine-guanine phosphoribosyltransferase, found in Salmonella choleraesuis (strain SC-B67).